The chain runs to 349 residues: Phenylalanine--tRNA ligase alpha subunit (349 aa).

Glutamate 258 contacts Mg(2+).

Belongs to the class-II aminoacyl-tRNA synthetase family. Phe-tRNA synthetase alpha subunit type 1 subfamily. As to quaternary structure, tetramer of two alpha and two beta subunits. Mg(2+) serves as cofactor.

It localises to the cytoplasm. The enzyme catalyses tRNA(Phe) + L-phenylalanine + ATP = L-phenylalanyl-tRNA(Phe) + AMP + diphosphate + H(+). In Rickettsia bellii (strain RML369-C), this protein is Phenylalanine--tRNA ligase alpha subunit.